Consider the following 238-residue polypeptide: Ribonuclease PH (238 aa).

Phosphate-binding positions include Arg86 and 124–126 (GTR).

This sequence belongs to the RNase PH family. As to quaternary structure, homohexameric ring arranged as a trimer of dimers.

The enzyme catalyses tRNA(n+1) + phosphate = tRNA(n) + a ribonucleoside 5'-diphosphate. Its function is as follows. Phosphorolytic 3'-5' exoribonuclease that plays an important role in tRNA 3'-end maturation. Removes nucleotide residues following the 3'-CCA terminus of tRNAs; can also add nucleotides to the ends of RNA molecules by using nucleoside diphosphates as substrates, but this may not be physiologically important. Probably plays a role in initiation of 16S rRNA degradation (leading to ribosome degradation) during starvation. The polypeptide is Ribonuclease PH (Psychrobacter arcticus (strain DSM 17307 / VKM B-2377 / 273-4)).